Consider the following 102-residue polypeptide: Large ribosomal subunit protein uL24 (102 aa).

It belongs to the universal ribosomal protein uL24 family. In terms of assembly, part of the 50S ribosomal subunit.

Functionally, one of two assembly initiator proteins, it binds directly to the 5'-end of the 23S rRNA, where it nucleates assembly of the 50S subunit. Its function is as follows. One of the proteins that surrounds the polypeptide exit tunnel on the outside of the subunit. This chain is Large ribosomal subunit protein uL24, found in Limosilactobacillus reuteri (strain DSM 20016) (Lactobacillus reuteri).